Reading from the N-terminus, the 232-residue chain is Flagellar L-ring protein (232 aa).

The first 21 residues, Met1–Gly21, serve as a signal peptide directing secretion. Cys22 is lipidated: N-palmitoyl cysteine. The S-diacylglycerol cysteine moiety is linked to residue Cys22.

The protein belongs to the FlgH family. In terms of assembly, the basal body constitutes a major portion of the flagellar organelle and consists of four rings (L,P,S, and M) mounted on a central rod.

It localises to the cell outer membrane. Its subcellular location is the bacterial flagellum basal body. In terms of biological role, assembles around the rod to form the L-ring and probably protects the motor/basal body from shearing forces during rotation. The protein is Flagellar L-ring protein of Shigella boydii serotype 18 (strain CDC 3083-94 / BS512).